Reading from the N-terminus, the 69-residue chain is uncharacterized protein (69 aa).

This is an uncharacterized protein from Bacillus subtilis (strain 168).